The sequence spans 209 residues: Ribosomal RNA large subunit methyltransferase E (209 aa).

Residues G63, W65, D83, D99, and D124 each contribute to the S-adenosyl-L-methionine site. Residue K164 is the Proton acceptor of the active site.

It belongs to the class I-like SAM-binding methyltransferase superfamily. RNA methyltransferase RlmE family.

It localises to the cytoplasm. It carries out the reaction uridine(2552) in 23S rRNA + S-adenosyl-L-methionine = 2'-O-methyluridine(2552) in 23S rRNA + S-adenosyl-L-homocysteine + H(+). Specifically methylates the uridine in position 2552 of 23S rRNA at the 2'-O position of the ribose in the fully assembled 50S ribosomal subunit. The protein is Ribosomal RNA large subunit methyltransferase E of Shewanella baltica (strain OS223).